The chain runs to 386 residues: Cytoplasmic 60S subunit biogenesis factor ZNF622 (386 aa).

Alanine 2 carries the N-acetylalanine modification. U1-type zinc fingers lie at residues tyrosine 4 to histidine 28 and threonine 67 to histidine 91. The segment at alanine 135–proline 237 is disordered. Basic and acidic residues predominate over residues glycine 165–proline 176. The span at glutamate 194 to glutamate 235 shows a compositional bias: acidic residues. Residue serine 269 is modified to Phosphoserine.

Belongs to the REI1 family. In terms of assembly, homo- and heterodimer. Associates with pre-60S ribosomal particles. Interacts with MELK and MYBL2. Interacts with DNAJC21. Post-translationally, phosphorylated by MELK. The phosphorylation may redirect the protein to the nucleus. In terms of processing, ubiquitinated by HECTD1, leading to its degradation.

The protein resides in the cytoplasm. It localises to the nucleus. In terms of biological role, pre-60S-associated cytoplasmic factor involved in the cytoplasmic maturation of the 60S subunit. This Rattus norvegicus (Rat) protein is Cytoplasmic 60S subunit biogenesis factor ZNF622 (Znf622).